The following is a 62-amino-acid chain: Snaclec aspercetin subunit alpha (62 aa).

Residues C2 and C13 are joined by a disulfide bond. In terms of domain architecture, C-type lectin spans 9–62 (YEGHCYRFFHPPKDWADAERFCTEQAKGGALVSIQRFGEEDFVSNLITKNLQRG).

This sequence belongs to the snaclec family. In terms of assembly, heterodimer; disulfide-linked. Expressed by the venom gland.

The protein resides in the secreted. Its function is as follows. Snaclec that binds to von Willebrand factor (VWF) and induces its interaction with GPIbalpha (GP1BA) (via the vWF A1 domain), resulting in platelet aggregation. Intravenous injection in mice induces a dose-dependent drop in platelet count (thrombocytopenia). Pretreatment by intravenous injection by this protein in mice potentiates the hemorrhagic lesion in the skin provoked by the metalloproteinase BaP1 intradermally injected. This result is not observed when both BaP1 and this protein are injected simultaneously. The sequence is that of Snaclec aspercetin subunit alpha from Bothrops asper (Terciopelo).